A 516-amino-acid chain; its full sequence is 2-isopropylmalate synthase (516 aa).

The 263-residue stretch at 5–267 (VIIFDTTLRD…STNIVHKEIY (263 aa)) folds into the Pyruvate carboxyltransferase domain. Mn(2+) contacts are provided by D14, H202, H204, and N238. The interval 392–516 (YLKFFSVQSI…NKKLKNLKKY (125 aa)) is regulatory domain.

This sequence belongs to the alpha-IPM synthase/homocitrate synthase family. LeuA type 1 subfamily. Homodimer. Mn(2+) is required as a cofactor.

Its subcellular location is the cytoplasm. It carries out the reaction 3-methyl-2-oxobutanoate + acetyl-CoA + H2O = (2S)-2-isopropylmalate + CoA + H(+). The protein operates within amino-acid biosynthesis; L-leucine biosynthesis; L-leucine from 3-methyl-2-oxobutanoate: step 1/4. Its function is as follows. Catalyzes the condensation of the acetyl group of acetyl-CoA with 3-methyl-2-oxobutanoate (2-ketoisovalerate) to form 3-carboxy-3-hydroxy-4-methylpentanoate (2-isopropylmalate). The protein is 2-isopropylmalate synthase of Buchnera aphidicola subsp. Diuraphis noxia.